Reading from the N-terminus, the 931-residue chain is Beta-mannosidase A (931 aa).

An N-terminal signal peptide occupies residues 1-21 (MRHSIGLAAALLAPTLPVALG). Residues Asn-40, Asn-79, Asn-247, Asn-282, Asn-316, Asn-326, and Asn-347 are each glycosylated (N-linked (GlcNAc...) asparagine). Catalysis depends on Glu-479, which acts as the Proton donor. 8 N-linked (GlcNAc...) asparagine glycosylation sites follow: Asn-550, Asn-608, Asn-658, Asn-738, Asn-790, Asn-798, Asn-830, and Asn-918.

The protein belongs to the glycosyl hydrolase 2 family. Beta-mannosidase A subfamily. Homodimer.

It is found in the secreted. The enzyme catalyses Hydrolysis of terminal, non-reducing beta-D-mannose residues in beta-D-mannosides.. It functions in the pathway glycan metabolism; N-glycan degradation. Exoglycosidase that cleaves the single beta-linked mannose residue from the non-reducing end of beta-mannosidic oligosaccharides of various complexity and length. Involved in the degradation of polymeric mannan and galactomannan. The polypeptide is Beta-mannosidase A (mndA) (Aspergillus niger (strain ATCC MYA-4892 / CBS 513.88 / FGSC A1513)).